Reading from the N-terminus, the 361-residue chain is Putative agmatine deiminase (361 aa).

Residue Cys354 is the Amidino-cysteine intermediate of the active site.

It belongs to the agmatine deiminase family.

It carries out the reaction agmatine + H2O = N-carbamoylputrescine + NH4(+). The polypeptide is Putative agmatine deiminase (Streptococcus pneumoniae (strain 70585)).